Here is a 238-residue protein sequence, read N- to C-terminus: Orotate phosphoribosyltransferase (238 aa).

A 5-phospho-alpha-D-ribose 1-diphosphate-binding site is contributed by K29. Residue 37 to 38 coordinates orotate; it reads FF. 5-phospho-alpha-D-ribose 1-diphosphate-binding positions include 87–88, R118, K119, K122, H124, and 144–152; these read YK and DDVITAGTA. Residues T148 and R176 each contribute to the orotate site.

This sequence belongs to the purine/pyrimidine phosphoribosyltransferase family. PyrE subfamily. As to quaternary structure, homodimer.

The enzyme catalyses orotidine 5'-phosphate + diphosphate = orotate + 5-phospho-alpha-D-ribose 1-diphosphate. Its pathway is pyrimidine metabolism; UMP biosynthesis via de novo pathway; UMP from orotate: step 1/2. Catalyzes the transfer of a ribosyl phosphate group from 5-phosphoribose 1-diphosphate to orotate, leading to the formation of orotidine monophosphate (OMP). The chain is Orotate phosphoribosyltransferase (URA5) from Coccidioides immitis (strain RS) (Valley fever fungus).